We begin with the raw amino-acid sequence, 313 residues long: Probable cell division protein WhiA (313 aa).

Residues Ser277–Glu311 constitute a DNA-binding region (H-T-H motif).

It belongs to the WhiA family.

Its function is as follows. Involved in cell division and chromosome segregation. This chain is Probable cell division protein WhiA, found in Lactobacillus gasseri (strain ATCC 33323 / DSM 20243 / BCRC 14619 / CIP 102991 / JCM 1131 / KCTC 3163 / NCIMB 11718 / NCTC 13722 / AM63).